Reading from the N-terminus, the 423-residue chain is MQYEDENGVNEPSRRRLLKGIGALALAGSCPVAHAQKTQSAPGTLSPDARNEKQPFYGEHQAGILTPQQAAMMLVAFDVLASDKADLERLFRLLTQRFAFLTQGGAAPETPNPRLPPLDSGILGGYIAPDNLTITLSVGHSLFDERFGLAPQMPKKLQKMTRFPNDSLDAALCHGDVLLQICANTQDTVIHALRDIIKHTPDLLSVRWKREGFISDHAARSKGKETPINLLGFKDGTANPDSQNDKLMQKVVWVTADQQEPAWTIGGSYQAVRLIQFRVEFWDRTPLKEQQTIFGRDKQTGAPLGMLHEHDVPDYASDPEGKVIALDSHIRLANPRTAESESSLMLRRGYSYSLGVTNSGQLDMGLLFVCYQHDLEKGFLTVQKRLNGEALEEYVKPIGGGYFFALPGVKDANDYLGSALLRV.

Positions 1–35 form a signal peptide, tat-type signal; sequence MQYEDENGVNEPSRRRLLKGIGALALAGSCPVAHA. Residues 236–238, His329, 334–336, and Arg347 contribute to the heme b site; these read GTA and NPR.

It belongs to the DyP-type peroxidase family. EfeB subfamily. Homodimer. Part of a ferrous iron transporter composed of EfeU, EfeO and EfeB. Heme b serves as cofactor. Predicted to be exported by the Tat system. The position of the signal peptide cleavage has not been experimentally proven.

Its subcellular location is the periplasm. The catalysed reaction is heme b + 2 H(+) = protoporphyrin IX + Fe(2+). Its function is as follows. Involved in the recovery of exogenous heme iron. Extracts iron from heme while preserving the protoporphyrin ring intact. This Escherichia coli O6:H1 (strain CFT073 / ATCC 700928 / UPEC) protein is Deferrochelatase (efeB).